The primary structure comprises 190 residues: Threonylcarbamoyl-AMP synthase (190 aa).

The region spanning 7-190 (GDAIAAAIDV…ALTGELFRQG (184 aa)) is the YrdC-like domain.

Belongs to the SUA5 family. TsaC subfamily.

It is found in the cytoplasm. The catalysed reaction is L-threonine + hydrogencarbonate + ATP = L-threonylcarbamoyladenylate + diphosphate + H2O. Functionally, required for the formation of a threonylcarbamoyl group on adenosine at position 37 (t(6)A37) in tRNAs that read codons beginning with adenine. Catalyzes the conversion of L-threonine, HCO(3)(-)/CO(2) and ATP to give threonylcarbamoyl-AMP (TC-AMP) as the acyladenylate intermediate, with the release of diphosphate. This is Threonylcarbamoyl-AMP synthase from Shigella dysenteriae serotype 1 (strain Sd197).